Reading from the N-terminus, the 183-residue chain is Archaemetzincin (183 aa).

Residue H131 participates in Zn(2+) binding. Catalysis depends on E132, which acts as the Proton acceptor. The Zn(2+) site is built by H135, H141, C142, C147, C166, and C169.

It belongs to the peptidase M54 family. Monomer. Requires Zn(2+) as cofactor.

Probable zinc metalloprotease whose natural substrate is unknown. The sequence is that of Archaemetzincin from Saccharolobus islandicus (strain Y.N.15.51 / Yellowstone #2) (Sulfolobus islandicus).